The chain runs to 428 residues: Immunoglobulin superfamily containing leucine-rich repeat protein (428 aa).

An N-terminal signal peptide occupies residues 1-18; it reads MRALCLLCWAVLLNLVRA. In terms of domain architecture, LRRNT spans 19–50; that stretch reads CPEPCDCGEKYGFQIADCAYRDLEGVPPGFPA. N51 is a glycosylation site (N-linked (GlcNAc...) asparagine). LRR repeat units lie at residues 51–72, 75–98, 99–122, 123–144, and 147–168; these read NVTTLSLSANRLPGLPEGAFRE, LLQSLWLAHNEIRSVAIGALAPLS, HLKSLDLSHNLLSEFAWSDLHNLS, ALQLLKMDSNELAFIPRDAFSS, and ALRSLQLNHNRLHALAEGTFAP. The region spanning 180 to 231 is the LRRCT domain; sequence NPFDCTCGIVWFKTWALASAVSIPEQDNIACTTPHVLKGIPLGRLPPLPCSA. An Ig-like domain is found at 232–343; the sequence is PSVQLSYQPS…GSAESSVNVA (112 aa). A disulfide bridge connects residues C257 and C327. N309 carries an N-linked (GlcNAc...) asparagine glycan.

In terms of tissue distribution, detected in thyroid, heart, retina and spinal cord.

It localises to the secreted. This chain is Immunoglobulin superfamily containing leucine-rich repeat protein (Islr), found in Mus musculus (Mouse).